We begin with the raw amino-acid sequence, 156 residues long: Small ribosomal subunit protein uS7 (156 aa).

It belongs to the universal ribosomal protein uS7 family. In terms of assembly, part of the 30S ribosomal subunit. Contacts proteins S9 and S11.

Its function is as follows. One of the primary rRNA binding proteins, it binds directly to 16S rRNA where it nucleates assembly of the head domain of the 30S subunit. Is located at the subunit interface close to the decoding center, probably blocks exit of the E-site tRNA. This is Small ribosomal subunit protein uS7 from Halalkalibacterium halodurans (strain ATCC BAA-125 / DSM 18197 / FERM 7344 / JCM 9153 / C-125) (Bacillus halodurans).